We begin with the raw amino-acid sequence, 266 residues long: GTP cyclohydrolase III (266 aa).

It belongs to the archaeal-type GTP cyclohydrolase family.

It carries out the reaction GTP + 3 H2O = 2-amino-5-formylamino-6-(5-phospho-D-ribosylamino)pyrimidin-4(3H)-one + 2 phosphate + 2 H(+). Functionally, catalyzes the formation of 2-amino-5-formylamino-6-ribofuranosylamino-4(3H)-pyrimidinone ribonucleotide monophosphate and inorganic phosphate from GTP. Also has an independent pyrophosphate phosphohydrolase activity. This is GTP cyclohydrolase III from Methanococcus maripaludis (strain C5 / ATCC BAA-1333).